A 322-amino-acid chain; its full sequence is Stage V sporulation protein K (322 aa).

99 to 106 (GNPGTGKT) lines the ATP pocket.

It belongs to the CbxX/CfxQ family.

This is Stage V sporulation protein K (spoVK) from Bacillus subtilis (strain 168).